Here is a 484-residue protein sequence, read N- to C-terminus: Probable peptide/nitrate transporter At3g43790 (484 aa).

Helical transmembrane passes span 39–59 (FIWLVSLCTALPISSLFPYIY), 76–96 (FYAGFVGSSFMIGRALTSIFW), 107–127 (PIILIGTFSVIIFNTLFGLST), 129–149 (FWLAISVRFLLGCFNCLLGVI), 168–188 (VVSTSRGIGLILGPAIGGYLA), 210–230 (FLPSLVISVYATAVLIACWWL), 278–298 (MAIIIVYCVFSLQEIAYNEIF), 318–338 (VGEVLAISGLGLLVFQLLVYP), 355–375 (VLLIPLLSCYPYIALLSGVTL), 381–401 (CASIIKNALSISLVTGLFIML), 416–436 (ISMTAMSVFKSFGPAGGGVLF), and 460–480 (VFLVLNLVQLVGLILTFIPYI).

This sequence belongs to the major facilitator superfamily.

It localises to the membrane. The protein is Probable peptide/nitrate transporter At3g43790 (ZIFL2) of Arabidopsis thaliana (Mouse-ear cress).